Consider the following 120-residue polypeptide: UPF0102 protein Pfl01_4685 (120 aa).

This sequence belongs to the UPF0102 family.

The chain is UPF0102 protein Pfl01_4685 from Pseudomonas fluorescens (strain Pf0-1).